Reading from the N-terminus, the 238-residue chain is Ribosomal RNA small subunit methyltransferase G (238 aa).

Residues glycine 106, leucine 111, 157 to 158 (IE), and arginine 170 each bind S-adenosyl-L-methionine.

Belongs to the methyltransferase superfamily. RNA methyltransferase RsmG family.

It is found in the cytoplasm. The enzyme catalyses guanosine(527) in 16S rRNA + S-adenosyl-L-methionine = N(7)-methylguanosine(527) in 16S rRNA + S-adenosyl-L-homocysteine. Its function is as follows. Specifically methylates the N7 position of guanine in position 527 of 16S rRNA. In Psychrobacter arcticus (strain DSM 17307 / VKM B-2377 / 273-4), this protein is Ribosomal RNA small subunit methyltransferase G.